Here is a 398-residue protein sequence, read N- to C-terminus: Nucleotide-sugar uncharacterized transporter 2 (398 aa).

A run of 10 helical transmembrane segments spans residues 54–74, 84–104, 119–139, 150–170, 179–199, 201–221, 242–262, 271–291, 299–319, and 322–342; these read FCGP…IILA, FNFP…LLAF, TTPF…SGLA, FYQM…FVLF, VMAL…DLEF, LFGA…KILW, FTVF…VLLF, AILI…LALG, VVLG…IFGS, and GFIS…YTWL.

This sequence belongs to the TPT transporter family. TPT (TC 2.A.7.9) subfamily.

Its subcellular location is the membrane. The sequence is that of Nucleotide-sugar uncharacterized transporter 2 from Arabidopsis thaliana (Mouse-ear cress).